The following is a 115-amino-acid chain: Large ribosomal subunit protein bL19 (115 aa).

The protein belongs to the bacterial ribosomal protein bL19 family.

Its function is as follows. This protein is located at the 30S-50S ribosomal subunit interface and may play a role in the structure and function of the aminoacyl-tRNA binding site. In Francisella tularensis subsp. tularensis (strain WY96-3418), this protein is Large ribosomal subunit protein bL19.